The following is a 334-amino-acid chain: CRISPR-associated endonuclease Cas1 (334 aa).

Glu-161, His-226, and Glu-241 together coordinate Mn(2+).

Belongs to the CRISPR-associated endonuclease Cas1 family. As to quaternary structure, homodimer, forms a heterotetramer with a Cas2 homodimer. It depends on Mg(2+) as a cofactor. Mn(2+) serves as cofactor.

In terms of biological role, CRISPR (clustered regularly interspaced short palindromic repeat), is an adaptive immune system that provides protection against mobile genetic elements (viruses, transposable elements and conjugative plasmids). CRISPR clusters contain spacers, sequences complementary to antecedent mobile elements, and target invading nucleic acids. CRISPR clusters are transcribed and processed into CRISPR RNA (crRNA). Acts as a dsDNA endonuclease. Involved in the integration of spacer DNA into the CRISPR cassette. The chain is CRISPR-associated endonuclease Cas1 from Methanothermobacter thermautotrophicus (strain ATCC 29096 / DSM 1053 / JCM 10044 / NBRC 100330 / Delta H) (Methanobacterium thermoautotrophicum).